The chain runs to 437 residues: MDKHKVKRQRLDRICDGIRPPILNGPMPVRPLVALLDGRDCTIEMPILKDVATVAFCDAQSTQEIHEKVLSEAVGALMYHTITLSREDLEKFKALRIIIKIGSGYDNIDIKSAAELGIAVCNIPSASVEETADSTLCHILNLYRRVTWLHQAMREGNRPASVEQIREVAGGAARIRGETLGIIGLGRIGQAVALRAKAFNFTVIFYDPYLADGVERSLGLQRMATLQELLMHSDCITLHCNLNEHNHHLINDFTIKQMRQGCFLVNTARGGLVDEKALAQALKDGRIRGAALDVHESEPFSFSQGPLKDAPNLICTPHTAWYSEHASIEAREEAAKEIRRAIAGPIPDSLRNCVNKDYLLAAVQWSGMEQAAVHPELNGASSYRFPPGVVGVTSAGHPSAIEGLVASSHPLIPSVSHTPSPGQTTKPDPDREIPTDQ.

NAD(+) is bound by residues serine 103, 183-188 (IGLGRI), aspartate 207, 240-246 (CNLNEHN), 267-269 (TAR), and aspartate 293. Residue arginine 269 is part of the active site. Glutamate 298 is a catalytic residue. The active-site Proton donor is the histidine 318. 318–321 (HTAW) is a binding site for NAD(+). The interval 410-437 (PLIPSVSHTPSPGQTTKPDPDREIPTDQ) is disordered. Residues 415 to 426 (VSHTPSPGQTTK) show a composition bias toward polar residues. The segment covering 427-437 (PDPDREIPTDQ) has biased composition (basic and acidic residues).

Belongs to the D-isomer specific 2-hydroxyacid dehydrogenase family. As to quaternary structure, interacts with the C-terminus of tcf7l1-a via the consensus motifs P-X-[DNS]-L-[STVA].

The protein resides in the nucleus. Its function is as follows. Corepressor targeting diverse transcription regulators. The protein is C-terminal-binding protein 2 (ctbp2) of Xenopus laevis (African clawed frog).